The following is a 734-amino-acid chain: Photosystem I P700 chlorophyll a apoprotein A2 (734 aa).

8 consecutive transmembrane segments (helical) span residues 46–69 (IFAS…FHVA), 135–158 (LYSG…LHLQ), 175–199 (LNHH…HVAI), 273–291 (MAHH…GHMY), 330–353 (IHFQ…QHMY), 369–395 (AALY…IFFI), 417–439 (AIIS…LYVH), and 517–535 (FLVH…LILV). The [4Fe-4S] cluster site is built by cysteine 559 and cysteine 568. The next 2 membrane-spanning stretches (helical) occupy residues 575 to 596 (AFYL…YWHW) and 643 to 665 (LSVW…MFLI). 3 residues coordinate chlorophyll a: histidine 654, methionine 662, and tyrosine 670. Tryptophan 671 contacts phylloquinone. A helical transmembrane segment spans residues 707–727 (LVGLAHFSVGYIFTYAAFLIA).

This sequence belongs to the PsaA/PsaB family. The PsaA/B heterodimer binds the P700 chlorophyll special pair and subsequent electron acceptors. PSI consists of a core antenna complex that captures photons, and an electron transfer chain that converts photonic excitation into a charge separation. The eukaryotic PSI reaction center is composed of at least 11 subunits. P700 is a chlorophyll a/chlorophyll a' dimer, A0 is one or more chlorophyll a, A1 is one or both phylloquinones and FX is a shared 4Fe-4S iron-sulfur center. is required as a cofactor.

The protein resides in the plastid. It is found in the chloroplast thylakoid membrane. The enzyme catalyses reduced [plastocyanin] + hnu + oxidized [2Fe-2S]-[ferredoxin] = oxidized [plastocyanin] + reduced [2Fe-2S]-[ferredoxin]. Functionally, psaA and PsaB bind P700, the primary electron donor of photosystem I (PSI), as well as the electron acceptors A0, A1 and FX. PSI is a plastocyanin-ferredoxin oxidoreductase, converting photonic excitation into a charge separation, which transfers an electron from the donor P700 chlorophyll pair to the spectroscopically characterized acceptors A0, A1, FX, FA and FB in turn. Oxidized P700 is reduced on the lumenal side of the thylakoid membrane by plastocyanin. The sequence is that of Photosystem I P700 chlorophyll a apoprotein A2 from Lotus japonicus (Lotus corniculatus var. japonicus).